Reading from the N-terminus, the 155-residue chain is SsrA-binding protein (155 aa).

Belongs to the SmpB family.

The protein localises to the cytoplasm. Functionally, required for rescue of stalled ribosomes mediated by trans-translation. Binds to transfer-messenger RNA (tmRNA), required for stable association of tmRNA with ribosomes. tmRNA and SmpB together mimic tRNA shape, replacing the anticodon stem-loop with SmpB. tmRNA is encoded by the ssrA gene; the 2 termini fold to resemble tRNA(Ala) and it encodes a 'tag peptide', a short internal open reading frame. During trans-translation Ala-aminoacylated tmRNA acts like a tRNA, entering the A-site of stalled ribosomes, displacing the stalled mRNA. The ribosome then switches to translate the ORF on the tmRNA; the nascent peptide is terminated with the 'tag peptide' encoded by the tmRNA and targeted for degradation. The ribosome is freed to recommence translation, which seems to be the essential function of trans-translation. The polypeptide is SsrA-binding protein (Streptococcus equi subsp. equi (strain 4047)).